A 344-amino-acid chain; its full sequence is Phenylalanine--tRNA ligase alpha subunit (344 aa).

Glu-256 is a Mg(2+) binding site.

The protein belongs to the class-II aminoacyl-tRNA synthetase family. Phe-tRNA synthetase alpha subunit type 1 subfamily. Tetramer of two alpha and two beta subunits. The cofactor is Mg(2+).

It is found in the cytoplasm. The catalysed reaction is tRNA(Phe) + L-phenylalanine + ATP = L-phenylalanyl-tRNA(Phe) + AMP + diphosphate + H(+). The polypeptide is Phenylalanine--tRNA ligase alpha subunit (Onion yellows phytoplasma (strain OY-M)).